The sequence spans 156 residues: 3-dehydroquinate dehydratase (156 aa).

Tyrosine 22 serves as the catalytic Proton acceptor. Residues asparagine 73, histidine 79, and aspartate 86 each coordinate substrate. Histidine 99 (proton donor) is an active-site residue. Residues 100–101 and arginine 110 contribute to the substrate site; that span reads LS.

Belongs to the type-II 3-dehydroquinase family. In terms of assembly, homododecamer.

The enzyme catalyses 3-dehydroquinate = 3-dehydroshikimate + H2O. It functions in the pathway metabolic intermediate biosynthesis; chorismate biosynthesis; chorismate from D-erythrose 4-phosphate and phosphoenolpyruvate: step 3/7. Functionally, catalyzes a trans-dehydration via an enolate intermediate. This is 3-dehydroquinate dehydratase from Nitratiruptor sp. (strain SB155-2).